A 215-amino-acid polypeptide reads, in one-letter code: Pyridoxine/pyridoxamine 5'-phosphate oxidase (215 aa).

Residues 9-12 (RKEY) and K67 each bind substrate. FMN contacts are provided by residues 62–67 (RIVLLK), 77–78 (YT), K84, and Q106. Y124, R128, and S132 together coordinate substrate. Residues 141–142 (QS) and W187 contribute to the FMN site. 193–195 (RLH) contacts substrate. R197 serves as a coordination point for FMN.

This sequence belongs to the pyridoxamine 5'-phosphate oxidase family. Homodimer. Requires FMN as cofactor.

The catalysed reaction is pyridoxamine 5'-phosphate + O2 + H2O = pyridoxal 5'-phosphate + H2O2 + NH4(+). It catalyses the reaction pyridoxine 5'-phosphate + O2 = pyridoxal 5'-phosphate + H2O2. It participates in cofactor metabolism; pyridoxal 5'-phosphate salvage; pyridoxal 5'-phosphate from pyridoxamine 5'-phosphate: step 1/1. It functions in the pathway cofactor metabolism; pyridoxal 5'-phosphate salvage; pyridoxal 5'-phosphate from pyridoxine 5'-phosphate: step 1/1. In terms of biological role, catalyzes the oxidation of either pyridoxine 5'-phosphate (PNP) or pyridoxamine 5'-phosphate (PMP) into pyridoxal 5'-phosphate (PLP). The sequence is that of Pyridoxine/pyridoxamine 5'-phosphate oxidase from Cytophaga hutchinsonii (strain ATCC 33406 / DSM 1761 / CIP 103989 / NBRC 15051 / NCIMB 9469 / D465).